The sequence spans 125 residues: Small ribosomal subunit protein uS12c (125 aa).

It belongs to the universal ribosomal protein uS12 family. As to quaternary structure, part of the 30S ribosomal subunit.

It localises to the plastid. The protein localises to the chloroplast. Functionally, with S4 and S5 plays an important role in translational accuracy. Located at the interface of the 30S and 50S subunits. The sequence is that of Small ribosomal subunit protein uS12c (rps12) from Oltmannsiellopsis viridis (Marine flagellate).